We begin with the raw amino-acid sequence, 855 residues long: uncharacterized protein (855 aa).

Transmembrane regions (helical) follow at residues 24 to 44 (PFQY…IVAI), 256 to 276 (AFTV…IFLI), 318 to 338 (IGTG…IGLV), 361 to 381 (LLKG…PPAI), 404 to 424 (LMPW…LMLW), 430 to 450 (LVVA…IAPP), 487 to 507 (IAIA…ISVG), 725 to 745 (ITIA…LSAL), 780 to 800 (MGGM…WILV), and 821 to 841 (FLRA…YPAW).

It belongs to the ABC-4 integral membrane protein family. The complex is probably composed of two ATP-binding proteins (Rv0986) and two transmembrane proteins (Rv0987).

Its subcellular location is the cell membrane. Its function is as follows. Probably part of an ABC transporter complex involved in host cell binding either through secretion of an adherence factor or through maintaining the architecture and integrity of the mycobacterial cell envelope. Could be required for host endothelial-cell invasion and/or intracellular survival. This is an uncharacterized protein from Mycobacterium tuberculosis (strain ATCC 25618 / H37Rv).